The chain runs to 289 residues: tRNA dimethylallyltransferase (289 aa).

9-16 (GTTASGKT) is an ATP binding site. Substrate is bound at residue 11 to 16 (TASGKT). The tract at residues 34–37 (DSLC) is interaction with substrate tRNA.

It belongs to the IPP transferase family. In terms of assembly, monomer. It depends on Mg(2+) as a cofactor.

It carries out the reaction adenosine(37) in tRNA + dimethylallyl diphosphate = N(6)-dimethylallyladenosine(37) in tRNA + diphosphate. In terms of biological role, catalyzes the transfer of a dimethylallyl group onto the adenine at position 37 in tRNAs that read codons beginning with uridine, leading to the formation of N6-(dimethylallyl)adenosine (i(6)A). This chain is tRNA dimethylallyltransferase, found in Campylobacter jejuni subsp. doylei (strain ATCC BAA-1458 / RM4099 / 269.97).